The sequence spans 119 residues: Ribonuclease P protein component (119 aa).

Belongs to the RnpA family. In terms of assembly, consists of a catalytic RNA component (M1 or rnpB) and a protein subunit.

The catalysed reaction is Endonucleolytic cleavage of RNA, removing 5'-extranucleotides from tRNA precursor.. RNaseP catalyzes the removal of the 5'-leader sequence from pre-tRNA to produce the mature 5'-terminus. It can also cleave other RNA substrates such as 4.5S RNA. The protein component plays an auxiliary but essential role in vivo by binding to the 5'-leader sequence and broadening the substrate specificity of the ribozyme. This is Ribonuclease P protein component from Salmonella paratyphi A (strain AKU_12601).